A 554-amino-acid chain; its full sequence is MSHYAPFIKPYIEYNQFGWGPCDVSDMEVPYQPFCKSDRLGKISDWMLPVQDKKYTNKYASTFGSNNSQYAYFHEDDDATFHLVDGGNPRALKPYQRNRYRPNQRNNVRLHGRYVRGNAMIGVGQGGIGGSGGAGAGNKYGKGRDMRRGYAGRRFMRNAPVRLRESSVLVRSDWVSIEEIDFPRLLKLSLPNIKDGIDIVTCGALEYYDKQCDRINVKNERPLQKVDRIINVPGTIDDPVIRRLSKTMGNVFATDDIIATLMCCTRSNYSWDIVIEKLGTKVFLDKRDNAQFDLLTVNETALEPPQDSEGSINSPQSLSLEATLINHNFSQQVLKIGDQEPKHKFEEPNPFEEPGVELASVAYRYKQWQLGDDVVLIARCKHNGVIKSPSGELQFVSIKALNEWDSKAANSVEWRQKLDSQRGAVLASELRNNACKLAKWTVEAVLAGSDQLKLGYVSRVNRNDHLRHVILGLQQFKPQEFATQINLNMDNAWGVLRCLVDIVLKQPDGKYLIMKDPNKPMIRLYDIPENAFDSDGNEDEETSEDRPFLKSMAN.

Residues 291–305 are RNA gate; sequence QFDLLTVNETALEPP. The segment at 530–554 is disordered; sequence NAFDSDGNEDEETSEDRPFLKSMAN.

This sequence belongs to the eIF-3 subunit D family. Component of the eukaryotic translation initiation factor 3 (eIF-3) complex. The eIF-3 complex interacts with pix.

Its subcellular location is the cytoplasm. In terms of biological role, mRNA cap-binding component of the eukaryotic translation initiation factor 3 (eIF-3) complex, which is involved in protein synthesis of a specialized repertoire of mRNAs and, together with other initiation factors, stimulates binding of mRNA and methionyl-tRNAi to the 40S ribosome. The eIF-3 complex specifically targets and initiates translation of a subset of mRNAs involved in cell proliferation. In the eIF-3 complex, eif3d specifically recognizes and binds the 7-methylguanosine cap of a subset of mRNAs. The sequence is that of Eukaryotic translation initiation factor 3 subunit D-2 from Drosophila mojavensis (Fruit fly).